A 692-amino-acid chain; its full sequence is MKKNSQIRAKIIELREKIEKWNHHYYQLQNPLVDDLVYDKTLRELEKLERENFFLFSLEELNQSPSQKVGSKITSKFEKVAHSSPMLSLNKAYSNEELEKWAKKASEILKTVTFFVEPKIDGIALSLFYQNGNLIKALTRGDGVFGENVLVNALKINDEFIPKKINYLEDLEVRGEIYIDNSTFASLQLETKKFKNPRNAASGILRRYKNHKPKIDAKSIKFLEEESDFRYLKSFFYTLVNPEKHKINSQFDSINFLRNLGFQVNPFQKKCSDLKDVFNFISIIKQKRDFLNYNIDGVVVKVNEFSIYEKLGSTSKFPHSAIAFKFEDDIAKTKLLAIFATIGRTGKVTYNAKIEPVTLAGSKISSAILPNYSYIENLKLNLNTEVYIKKAGEIIPQIIGSVHNYPKTNFSIVKNCPKCNSELVNSESGLDQFCQNQFCPEIILQKIVHFCSKNALNIESLAQKRIEKFLEKGLISSACDIFYLKDKLELIYERLSNKNQLLTKQNASQSMQIKSIMKLLNEVERAKNIDFYRLIFGLGIRNVGLKAAKILSRYASNLSELRNLDFNLLKNQHDFGPVIIESLIDYFNNQKNSEQLNCLETVGFNFKTTFLTNQSNSWASFAISGKLSKPRDEYVRIIEESGASFHESLTKKTDFLLLGQSAGSKIEKAKKAGIKIINEVQFFDLIKNSKKT.

NAD(+) contacts are provided by residues 35-39 (DLVYD), 88-89 (SL), and glutamate 117. Lysine 119 serves as the catalytic N6-AMP-lysine intermediate. Residues arginine 140, glutamate 176, lysine 301, and lysine 325 each coordinate NAD(+). The Zn(2+) site is built by cysteine 416, cysteine 419, cysteine 434, and cysteine 439. Positions 611-692 (LTNQSNSWAS…FDLIKNSKKT (82 aa)) constitute a BRCT domain.

This sequence belongs to the NAD-dependent DNA ligase family. LigA subfamily. The cofactor is Mg(2+). Requires Mn(2+) as cofactor.

The catalysed reaction is NAD(+) + (deoxyribonucleotide)n-3'-hydroxyl + 5'-phospho-(deoxyribonucleotide)m = (deoxyribonucleotide)n+m + AMP + beta-nicotinamide D-nucleotide.. DNA ligase that catalyzes the formation of phosphodiester linkages between 5'-phosphoryl and 3'-hydroxyl groups in double-stranded DNA using NAD as a coenzyme and as the energy source for the reaction. It is essential for DNA replication and repair of damaged DNA. The polypeptide is DNA ligase (Mesomycoplasma hyopneumoniae (strain J / ATCC 25934 / NCTC 10110) (Mycoplasma hyopneumoniae)).